A 459-amino-acid polypeptide reads, in one-letter code: Mitochondrial distribution and morphology protein 10 (459 aa).

The protein belongs to the MDM10 family. Component of the ER-mitochondria encounter structure (ERMES) or MDM complex, composed of mmm1, mdm10, mdm12 and mdm34. Associates with the mitochondrial outer membrane sorting assembly machinery SAM(core) complex.

It localises to the mitochondrion outer membrane. Functionally, component of the ERMES/MDM complex, which serves as a molecular tether to connect the endoplasmic reticulum and mitochondria. Components of this complex are involved in the control of mitochondrial shape and protein biogenesis and may function in phospholipid exchange. mdm10 is involved in the late assembly steps of the general translocase of the mitochondrial outer membrane (TOM complex). Functions in the tom40-specific route of the assembly of outer membrane beta-barrel proteins, including the association of tom40 with the receptor tom22 and small TOM proteins. Can associate with the SAM(core) complex as well as the mdm12-mmm1 complex, both involved in late steps of the major beta-barrel assembly pathway, that is responsible for biogenesis of all outer membrane beta-barrel proteins. May act as a switch that shuttles between both complexes and channels precursor proteins into the tom40-specific pathway. Plays a role in mitochondrial morphology and in the inheritance of mitochondria. This is Mitochondrial distribution and morphology protein 10 (mdmB) from Aspergillus terreus (strain NIH 2624 / FGSC A1156).